The primary structure comprises 427 residues: Serine hydroxymethyltransferase (427 aa).

(6S)-5,6,7,8-tetrahydrofolate contacts are provided by residues L118 and G122–L124. An N6-(pyridoxal phosphate)lysine modification is found at K227. Residues E243 and S351–F353 contribute to the (6S)-5,6,7,8-tetrahydrofolate site.

It belongs to the SHMT family. In terms of assembly, homodimer. The cofactor is pyridoxal 5'-phosphate.

The protein localises to the cytoplasm. The enzyme catalyses (6R)-5,10-methylene-5,6,7,8-tetrahydrofolate + glycine + H2O = (6S)-5,6,7,8-tetrahydrofolate + L-serine. Its pathway is one-carbon metabolism; tetrahydrofolate interconversion. It functions in the pathway amino-acid biosynthesis; glycine biosynthesis; glycine from L-serine: step 1/1. In terms of biological role, catalyzes the reversible interconversion of serine and glycine with tetrahydrofolate (THF) serving as the one-carbon carrier. This reaction serves as the major source of one-carbon groups required for the biosynthesis of purines, thymidylate, methionine, and other important biomolecules. Also exhibits THF-independent aldolase activity toward beta-hydroxyamino acids, producing glycine and aldehydes, via a retro-aldol mechanism. This is Serine hydroxymethyltransferase from Thermotoga maritima (strain ATCC 43589 / DSM 3109 / JCM 10099 / NBRC 100826 / MSB8).